Consider the following 105-residue polypeptide: Guanidinium exporter (105 aa).

A helical transmembrane segment spans residues 1–21 (MSWIILVIAGLLEVVWAVGLK). The Cytoplasmic portion of the chain corresponds to 22 to 28 (YTHGFSR). The chain crosses the membrane as a helical span at residues 29-49 (LTPSVITVTAMIVSLALLAWA). Residues 50-57 (MKSLPVGT) are Periplasmic-facing. Residues 58-78 (AYAVWTGIGAVGAAITGIVLL) traverse the membrane as a helical segment. Over 79–81 (GES) the chain is Cytoplasmic. Residues 82-102 (ANPMRLASLALIVLGIIGLKL) traverse the membrane as a helical segment. Residues 103-105 (STH) are Periplasmic-facing.

This sequence belongs to the drug/metabolite transporter (DMT) superfamily. Small multidrug resistance (SMR) (TC 2.A.7.1) family. Gdx/SugE subfamily.

The protein localises to the cell inner membrane. Functionally, guanidinium ion exporter. Couples guanidinium export to the proton motive force, exchanging one guanidinium ion for two protons. The chain is Guanidinium exporter from Escherichia coli O6:H1 (strain CFT073 / ATCC 700928 / UPEC).